We begin with the raw amino-acid sequence, 40 residues long: Photosystem II reaction center protein J (40 aa).

A helical transmembrane segment spans residues 8–28 (IPLWLISTVTGTLVIGLMGIF).

The protein belongs to the PsbJ family. PSII is composed of 1 copy each of membrane proteins PsbA, PsbB, PsbC, PsbD, PsbE, PsbF, PsbH, PsbI, PsbJ, PsbK, PsbL, PsbM, PsbT, PsbX, PsbY, PsbZ, Psb30/Ycf12, at least 3 peripheral proteins of the oxygen-evolving complex and a large number of cofactors. It forms dimeric complexes.

It is found in the plastid. The protein localises to the chloroplast thylakoid membrane. In terms of biological role, one of the components of the core complex of photosystem II (PSII). PSII is a light-driven water:plastoquinone oxidoreductase that uses light energy to abstract electrons from H(2)O, generating O(2) and a proton gradient subsequently used for ATP formation. It consists of a core antenna complex that captures photons, and an electron transfer chain that converts photonic excitation into a charge separation. This chain is Photosystem II reaction center protein J, found in Ginkgo biloba (Ginkgo).